Reading from the N-terminus, the 165-residue chain is UPF0179 protein Igni_1272 (165 aa).

It belongs to the UPF0179 family.

The sequence is that of UPF0179 protein Igni_1272 from Ignicoccus hospitalis (strain KIN4/I / DSM 18386 / JCM 14125).